We begin with the raw amino-acid sequence, 390 residues long: Neuromedin-B receptor (390 aa).

The disordered stretch occupies residues 1–20 (MPPRSLPNLSLPTEASESEL). At 1–41 (MPPRSLPNLSLPTEASESELEPEVWENDFLPDSDGTTAELV) the chain is on the extracellular side. An N-linked (GlcNAc...) asparagine glycan is attached at Asn8. Residues 42 to 65 (IRCVIPSLYLIIISVGLLGNIMLV) form a helical membrane-spanning segment. Residues 66–79 (KIFLTNSTMRSVPN) are Cytoplasmic-facing. A helical transmembrane segment spans residues 80–99 (IFISNLAAGDLLLLLTCVPV). The Extracellular segment spans residues 100–117 (DASRYFFDEWVFGKLGCK). A disulfide bond links Cys116 and Cys198. The helical transmembrane segment at 118–139 (LIPAIQLTSVGVSVFTLTALSA) threads the bilayer. Residues 140 to 156 (DRYRAIVNPMDMQTSGV) lie on the Cytoplasmic side of the membrane. The chain crosses the membrane as a helical span at residues 157–177 (VLWTSLKAVGIWVVSVLLAVP). Residues 178–211 (EAVFSEVARIGSSDNSSFTACIPYPQTDELHPKI) lie on the Extracellular side of the membrane. A glycan (N-linked (GlcNAc...) asparagine) is linked at Asn192. The helical transmembrane segment at 212-235 (HSVLIFLVYFLIPLVIISIYYYHI) threads the bilayer. Topologically, residues 236–266 (AKTLIRSAHNLPGEYNEHTKKQMETRKRLAK) are cytoplasmic. A helical transmembrane segment spans residues 267–287 (IVLVFVGCFVFCWFPNHILYL). The Extracellular segment spans residues 288-299 (YRSFNYKEIDPS). The helical transmembrane segment at 300 to 327 (LGHMIVTLVARVLSFSNSCVNPFALYLL) threads the bilayer. At 328-390 (SESFRKHFNS…GHSTKQEIAL (63 aa)) the chain is on the cytoplasmic side. Cys341 carries S-palmitoyl cysteine lipidation. Ser352 carries the post-translational modification Phosphoserine.

It belongs to the G-protein coupled receptor 1 family. In terms of tissue distribution, brain (olfactory bulb and central thalamic regions), and esophagus.

The protein localises to the cell membrane. Functionally, receptor for neuromedin-B. Contributes to the maintenance of basal sigh rate through signaling in the pre-Botzinger complex, a cluster of several thousand neurons in the ventrolateral medulla responsible for inspiration during respiratory activity. Contributes to the induction of sneezing following exposure to chemical irritants or allergens which causes release of NMB by nasal sensory neurons and activation of NMBR-expressing neurons in the sneeze-evoking region of the brainstem. These in turn activate neurons of the caudal ventral respiratory group, giving rise to the sneezing response. Contributes to induction of acute itch, possibly through its activation on dorsal root ganglion neurons by the NMB peptide. Plays a role in the innate immune response to influenza A virus infection by enhancing interferon alpha expression and reducing expression of IL6. Plays a role in CSF1-induced proliferation of osteoclast precursors by contributing to the positive regulation of the expression of the CSF1 receptor CSF1R. This is Neuromedin-B receptor (Nmbr) from Rattus norvegicus (Rat).